The sequence spans 177 residues: Large ribosomal subunit protein uL10 (177 aa).

The protein belongs to the universal ribosomal protein uL10 family. As to quaternary structure, part of the ribosomal stalk of the 50S ribosomal subunit. The N-terminus interacts with L11 and the large rRNA to form the base of the stalk. The C-terminus forms an elongated spine to which L12 dimers bind in a sequential fashion forming a multimeric L10(L12)X complex.

Forms part of the ribosomal stalk, playing a central role in the interaction of the ribosome with GTP-bound translation factors. This is Large ribosomal subunit protein uL10 from Leptospira borgpetersenii serovar Hardjo-bovis (strain JB197).